A 225-amino-acid polypeptide reads, in one-letter code: uncharacterized protein (225 aa).

The interval 1–48 (MTQLVTRARSARGSTLGEQPRQDQLDFADHTGTAGDGNDGAAAASGPV) is disordered. The segment covering 20–29 (PRQDQLDFAD) has biased composition (basic and acidic residues). The HTH merR-type domain maps to 64 to 136 (GYRGPSACQI…LHNIRVAVDH (73 aa)). Positions 201–225 (DGGESIAAPEDELASRRKHRDRKIG) are disordered. Residues 216–225 (RRKHRDRKIG) show a composition bias toward basic residues.

This is an uncharacterized protein from Mycobacterium tuberculosis (strain CDC 1551 / Oshkosh).